The sequence spans 407 residues: MSNGIDKVVLAYSGGLDTSIILKWLQDEYQCEVVAFCADLGQAEELEPARAKAEKFGVKEIYIDDLKEEFVRDFVFPMYRANTLYEGVYHLGTSIARPLIAKRQIEIANATGAQAVSHGATGKGNDQVRFELGYYALRPDIRVIAPWREWDLTSRDKLFAYAEKHGIPVPTDKRGEVPYSMDRNLLHISFEGKALEDPWVEPDEEMFVLSVSPEKAPDQATYVELTFRQGDLVAIDDQEMSPATLLAKLNQLGGRNGIGRLDLVENRYVGMKSRGVYETPGGTILGVAHRAMESLTLDREVAHMKDELMPRYAKLIYNGYWFSPERAMLQTMIDASQTFVNGKVRVKLYKGNVVVVGRQSENSLFDPAIATFEDDKGAYNQADADGFIKLNALRMRIAAMLRNGPKV.

ATP contacts are provided by residues 11–19 (AYSGGLDTS) and alanine 38. L-citrulline-binding residues include tyrosine 89 and serine 94. Glycine 119 serves as a coordination point for ATP. L-aspartate is bound by residues threonine 121, asparagine 125, and aspartate 126. Asparagine 125 lines the L-citrulline pocket. Residues arginine 129, serine 180, serine 189, glutamate 265, and tyrosine 277 each coordinate L-citrulline.

This sequence belongs to the argininosuccinate synthase family. Type 1 subfamily. As to quaternary structure, homotetramer.

The protein localises to the cytoplasm. It carries out the reaction L-citrulline + L-aspartate + ATP = 2-(N(omega)-L-arginino)succinate + AMP + diphosphate + H(+). Its pathway is amino-acid biosynthesis; L-arginine biosynthesis; L-arginine from L-ornithine and carbamoyl phosphate: step 2/3. This is Argininosuccinate synthase from Magnetococcus marinus (strain ATCC BAA-1437 / JCM 17883 / MC-1).